The primary structure comprises 606 residues: Mitogen-activated protein kinase kinase kinase 7 (606 aa).

Positions 1 to 300 (MSTASAASSS…FPGADEPLQY (300 aa)) are interaction with MAPK8IP1. Residues 36-291 (IEVEEVVGRG…KIMTHLMRYF (256 aa)) enclose the Protein kinase domain. Residues 42 to 50 (VGRGAFGVV) and Lys-63 each bind ATP. Lys-72 participates in a covalent cross-link: Glycyl lysine isopeptide (Lys-Gly) (interchain with G-Cter in ubiquitin). Asp-156 acts as the Proton acceptor in catalysis. A Glycyl lysine isopeptide (Lys-Gly) (interchain with G-Cter in ubiquitin) cross-link involves residue Lys-158. 2 positions are modified to phosphothreonine; by autocatalysis: Thr-184 and Thr-187. Ser-192 carries the phosphoserine; by autocatalysis modification. Residue Lys-209 forms a Glycyl lysine isopeptide (Lys-Gly) (interchain with G-Cter in ubiquitin) linkage. Disordered regions lie at residues 301 to 338 (PCQYSDEGQSNSATSTGSFMDIASTNTSNKSDTNMEQV) and 354 to 391 (KNQAKQQSDSGRLSLGASRGSSVESLPPTSEGKRMSAD). Positions 306-338 (DEGQSNSATSTGSFMDIASTNTSNKSDTNMEQV) are enriched in polar residues. Residues 361–375 (SDSGRLSLGASRGSS) are compositionally biased toward low complexity. A phosphoserine mark is found at Ser-367, Ser-389, and Ser-439. The span at 443-452 (LTVTGTEPGQ) shows a compositional bias: polar residues. The tract at residues 443 to 492 (LTVTGTEPGQVSSRSSSPSVRMITTSGPTSEKPARSLPWTPDDSTDTNGS) is disordered. Over residues 453–463 (VSSRSSSPSVR) the composition is skewed to low complexity. Position 455 is a phosphoserine (Ser-455).

It belongs to the protein kinase superfamily. STE Ser/Thr protein kinase family. MAP kinase kinase kinase subfamily. As to quaternary structure, can form homodimer. Binds both upstream activators and downstream substrates in multimolecular complexes. Interacts with TAB1/MAP3K7IP1, TAB2/MAP3K7IP2 and TAB3/MAP3K7IP3. Identified in the TRIKA2 complex composed of MAP3K7/TAK1, TAB1/MAP3K7IP1 and TAB2/MAP3K7IP2. Interacts with PPM1L and PPM1B/PP2CB. Interaction with PP2A and PPP6C leads to its repressed activity. Interacts with TRAF6 and TAB1/MAP3K7IP1; during IL-1 signaling. Interacts with TAOK1 and TAOK2; interaction with TAOK2 interferes with MAP3K7 interaction with IKKA, thus preventing NF-kappa-B activation. Interacts with DYNC2I2 (via WD domains). Interacts with CYLD and RBCK1. Interacts with TGFBR1; induces MAP3K7/TAK1 activation by TRAF6. Interacts with MAPK8IP1 and SMAD6. Interacts with isoform 1 of VRK2. Interacts with DAB2; the interaction is induced by TGF-beta stimulation and may mediate TGF-beta stimulated JNK activation. Interacts with TRIM5. Part of a complex containing ITCH, NDFIP1 and MAP3K7. Interacts with PLEKHM1 (via N- and C-terminus). Found in a complex with SH3RF1, RAC2, MAP2K7/MKK7, MAPK8IP1/JIP1, MAPK8/JNK1 and MAPK9/JNK2. Interacts with SASH1. Interacts with RIPK1. It depends on Mg(2+) as a cofactor. In terms of processing, association with TAB1/MAP3K7IP1 promotes autophosphorylation at Ser-192 and subsequent activation. Association with TAB2/MAP3K7IP2, itself associated with free unanchored Lys-63 polyubiquitin chain, promotes autophosphorylation and subsequent activation of MAP3K7. Dephosphorylation at Ser-192 by PPM1B/PP2CB and at Thr-187 by PP2A and PPP6C leads to inactivation. Deubiquitinated by USP19; leading to negative regulation of TNF-alpha- and IL-1beta-triggered NF-kappa-B activation. Post-translationally, 'Lys-48'-linked polyubiquitination at Lys-72 is induced by TNFalpha, and leads to proteasomal degradation. Undergoes 'Lys-48'-linked polyubiquitination catalyzed by ITCH. 'Lys-63'-linked polyubiquitination at Lys-158 by TRIM8 does not lead to proteasomal degradation but contributes to autophosphorylation and activation. Deubiquitinated by CYLD, a protease that selectively cleaves 'Lys-63'-linked ubiquitin chains.

Its subcellular location is the cytoplasm. The protein resides in the cell membrane. It carries out the reaction L-seryl-[protein] + ATP = O-phospho-L-seryl-[protein] + ADP + H(+). The enzyme catalyses L-threonyl-[protein] + ATP = O-phospho-L-threonyl-[protein] + ADP + H(+). Its activity is regulated as follows. Activated by pro-inflammatory cytokines and in response to physical and chemical stresses, including osmotic stress, oxidative stress, arsenic and ultraviolet light irradiation. Activated by 'Lys-63'-linked polyubiquitination and by autophosphorylation. Association with TAB1/MAP3K7IP1 and TAB2/MAP3K7IP2 promotes activation through autophosphorylation, whereas PPM1B/PP2CB, PP2A and PPP6C dephosphorylation leads to inactivation. Ceramides are also able to activate MAP3K7/TAK1. Functionally, serine/threonine kinase which acts as an essential component of the MAP kinase signal transduction pathway. Plays an important role in the cascades of cellular responses evoked by changes in the environment. Mediates signal transduction of TRAF6, various cytokines including interleukin-1 (IL-1), transforming growth factor-beta (TGFB), TGFB-related factors like BMP2 and BMP4, toll-like receptors (TLR), tumor necrosis factor receptor CD40 and B-cell receptor (BCR). Once activated, acts as an upstream activator of the MKK/JNK signal transduction cascade and the p38 MAPK signal transduction cascade through the phosphorylation and activation of several MAP kinase kinases like MAP2K1/MEK1, MAP2K3/MKK3, MAP2K6/MKK6 and MAP2K7/MKK7. These MAP2Ks in turn activate p38 MAPKs and c-jun N-terminal kinases (JNKs); both p38 MAPK and JNK pathways control the transcription factors activator protein-1 (AP-1). Independently of MAP2Ks and p38 MAPKs, acts as a key activator of NF-kappa-B by promoting activation of the I-kappa-B-kinase (IKK) core complex. Mechanistically, recruited to polyubiquitin chains of RIPK2 and IKBKG/NEMO via TAB2/MAP3K7IP2 and TAB3/MAP3K7IP3, and catalyzes phosphorylation and activation of IKBKB/IKKB component of the IKK complex, leading to NF-kappa-B activation. In osmotic stress signaling, plays a major role in the activation of MAPK8/JNK1, but not that of NF-kappa-B. Promotes TRIM5 capsid-specific restriction activity. Phosphorylates RIPK1 at 'Ser-321' which positively regulates RIPK1 interaction with RIPK3 to promote necroptosis but negatively regulates RIPK1 kinase activity and its interaction with FADD to mediate apoptosis. Phosphorylates STING1 in response to cGAMP-activation, promoting association between STEEP1 and STING1 and STING1 translocation to COPII vesicles. This chain is Mitogen-activated protein kinase kinase kinase 7 (Map3k7), found in Rattus norvegicus (Rat).